The chain runs to 465 residues: BTB/POZ and MATH domain-containing protein 4 (465 aa).

Positions 12–40 are disordered; that stretch reads LQRQNPLQKSEQQRRNFEMPSPPTTTSLS. The region spanning 46 to 180 is the MATH domain; that stretch reads NGSHSFTIKG…DDCLKINCTV (135 aa). Residues 216-282 form the BTB domain; that stretch reads SDITFNVSGE…IYKDALIEDA (67 aa). 2 disordered regions span residues 395–429 and 441–465; these read SGGGGKTRSVWGQFSDGGAETNGRQAQTWGDINGG and VNANGSGRNNNDNNNSDDPMAELED. Over residues 442 to 458 the composition is skewed to low complexity; it reads NANGSGRNNNDNNNSDD.

The protein belongs to the Tdpoz family. In terms of assembly, interacts with RAP2-4. Binds to MYB56 at the promoter of FLOWERING LOCUS T (FT). As to expression, ubiquitous.

It is found in the cytoplasm. Its pathway is protein modification; protein ubiquitination. Functionally, may act as a substrate-specific adapter of an E3 ubiquitin-protein ligase complex (CUL3-RBX1-BTB) which mediates the ubiquitination and subsequent proteasomal degradation of target proteins. The sequence is that of BTB/POZ and MATH domain-containing protein 4 (BPM4) from Arabidopsis thaliana (Mouse-ear cress).